Reading from the N-terminus, the 395-residue chain is ETS-related transcription factor Elf-3 (395 aa).

A PNT domain is found at 69 to 155; it reads EPPAVLHLAE…AQLRDLTSSS (87 aa). A compositionally biased stretch (low complexity) spans 200 to 240; the sequence is ASPYYGSSYGPGAPSPGSSDFSTSGTDTPQSSHSSDSGGSD. The disordered stretch occupies residues 200–275; that stretch reads ASPYYGSSYG…HGKRKRGRPR (76 aa). Basic and acidic residues predominate over residues 246 to 265; the sequence is TDSKVFPRDGFPDYKKGEPK. A compositionally biased stretch (basic residues) spans 266 to 275; it reads HGKRKRGRPR. A DNA-binding region (ETS) is located at residues 297–379; it reads THLWEFIRDI…DGRRLVYKFG (83 aa).

The protein belongs to the ETS family. Interacts with TBP. Interacts with CREBBP and EP300; these act as transcriptional coactivators of ELF3 and positively modulate its function. Interacts with XRCC5/KU86 and XRCC6/KU70; these inhibit the ability of ELF3 to bind DNA and negatively modulate its transcriptional activity. Associated with CLND7 and POU2F3. Interacts with ZNF768.

It localises to the cytoplasm. The protein resides in the nucleus. In terms of biological role, transcriptional activator that binds and transactivates ETS sequences containing the consensus nucleotide core sequence GGA[AT]. Acts synergistically with POU2F3 to transactivate the SPRR2A promoter and with RUNX1 to transactivate the ANGPT1 promoter. Also transactivates collagenase, CCL20, CLND7, FLG, KRT8, NOS2, PTGS2, SPRR2B, TGFBR2 and TGM3 promoters. Represses KRT4 promoter activity. Involved in mediating vascular inflammation. May play an important role in epithelial cell differentiation and tumorigenesis. May be a critical downstream effector of the ERBB2 signaling pathway. May be associated with mammary gland development and involution. Plays an important role in the regulation of transcription with TATA-less promoters in preimplantation embryos, which is essential in preimplantation development. This is ETS-related transcription factor Elf-3 from Rattus norvegicus (Rat).